The following is an 82-amino-acid chain: Small ribosomal subunit protein uS17 (82 aa).

The protein belongs to the universal ribosomal protein uS17 family. As to quaternary structure, part of the 30S ribosomal subunit.

In terms of biological role, one of the primary rRNA binding proteins, it binds specifically to the 5'-end of 16S ribosomal RNA. The protein is Small ribosomal subunit protein uS17 of Shewanella denitrificans (strain OS217 / ATCC BAA-1090 / DSM 15013).